Consider the following 477-residue polypeptide: Ribulose bisphosphate carboxylase large chain (477 aa).

A propeptide spanning residues 1 to 2 (MS) is cleaved from the precursor. At Pro3 the chain carries N-acetylproline. An N6,N6,N6-trimethyllysine modification is found at Lys14. Residues Asn123 and Thr173 each coordinate substrate. Lys175 acts as the Proton acceptor in catalysis. Residue Lys177 coordinates substrate. Lys201, Asp203, and Glu204 together coordinate Mg(2+). N6-carboxylysine is present on Lys201. Catalysis depends on His294, which acts as the Proton acceptor. The substrate site is built by Arg295, His327, and Ser379.

Belongs to the RuBisCO large chain family. Type I subfamily. Heterohexadecamer of 8 large chains and 8 small chains; disulfide-linked. The disulfide link is formed within the large subunit homodimers. It depends on Mg(2+) as a cofactor. Post-translationally, the disulfide bond which can form in the large chain dimeric partners within the hexadecamer appears to be associated with oxidative stress and protein turnover.

The protein localises to the plastid. It is found in the chloroplast. It carries out the reaction 2 (2R)-3-phosphoglycerate + 2 H(+) = D-ribulose 1,5-bisphosphate + CO2 + H2O. The catalysed reaction is D-ribulose 1,5-bisphosphate + O2 = 2-phosphoglycolate + (2R)-3-phosphoglycerate + 2 H(+). Functionally, ruBisCO catalyzes two reactions: the carboxylation of D-ribulose 1,5-bisphosphate, the primary event in carbon dioxide fixation, as well as the oxidative fragmentation of the pentose substrate in the photorespiration process. Both reactions occur simultaneously and in competition at the same active site. This is Ribulose bisphosphate carboxylase large chain (rbcL) from Solanum tuberosum (Potato).